A 329-amino-acid polypeptide reads, in one-letter code: Glycerol-3-phosphate dehydrogenase [NAD(P)+] (329 aa).

Residues tyrosine 14, arginine 34, and lysine 108 each contribute to the NADPH site. Sn-glycerol 3-phosphate-binding residues include lysine 108, glycine 137, and serine 139. Alanine 141 serves as a coordination point for NADPH. Sn-glycerol 3-phosphate contacts are provided by lysine 192, aspartate 245, serine 255, arginine 256, and asparagine 257. Residue lysine 192 is the Proton acceptor of the active site. An NADPH-binding site is contributed by arginine 256. Isoleucine 280 and glutamate 282 together coordinate NADPH.

It belongs to the NAD-dependent glycerol-3-phosphate dehydrogenase family.

It localises to the cytoplasm. It carries out the reaction sn-glycerol 3-phosphate + NAD(+) = dihydroxyacetone phosphate + NADH + H(+). It catalyses the reaction sn-glycerol 3-phosphate + NADP(+) = dihydroxyacetone phosphate + NADPH + H(+). Its pathway is membrane lipid metabolism; glycerophospholipid metabolism. Functionally, catalyzes the reduction of the glycolytic intermediate dihydroxyacetone phosphate (DHAP) to sn-glycerol 3-phosphate (G3P), the key precursor for phospholipid synthesis. The protein is Glycerol-3-phosphate dehydrogenase [NAD(P)+] of Wigglesworthia glossinidia brevipalpis.